Here is a 2058-residue protein sequence, read N- to C-terminus: E3 ubiquitin-protein ligase ubr-1 (2058 aa).

A UBR-type zinc finger spans residues Gln93–Lys164. The segment at Val1107–Val1175 is disordered. The segment covering Pro1108–Ala1119 has biased composition (low complexity). 2 stretches are compositionally biased toward basic and acidic residues: residues Glu1123–Gln1138 and Lys1153–Val1175. Residues Leu1217–Arg1335 form an RING-type; atypical zinc finger. 2 disordered regions span residues Leu1381–Asn1416 and Pro1475–Lys1499. Over residues Lys1388–His1397 the composition is skewed to basic residues. Residues Ser1398–Asp1413 show a composition bias toward basic and acidic residues. Polar residues predominate over residues Gly1486–Gln1495. A helical membrane pass occupies residues Ile1695–Trp1715.

It belongs to the E3 ubiquitin-protein ligase UBR1-like family. As to quaternary structure, interacts with ubc-1. Component of a complex containing at least ced-3, ubr-1 and possibly ate-1. Within complex interacts with ced-3 (via the p17 subunit); this interaction is required for the ced-3-mediated cleavage and subsequent degradation of the heterochronic protein lin-28. As to expression, expressed in pharyngeal muscles, body wall muscles and a subset of neurons throughout postembryonic development. Prominently expressed in premotor interneurons, but not expressed in ventral cord motor neurons. Weakly expressed in hypodermal seam cells.

It localises to the membrane. The enzyme catalyses S-ubiquitinyl-[E2 ubiquitin-conjugating enzyme]-L-cysteine + [acceptor protein]-L-lysine = [E2 ubiquitin-conjugating enzyme]-L-cysteine + N(6)-ubiquitinyl-[acceptor protein]-L-lysine.. Its pathway is protein modification; protein ubiquitination. E3 ubiquitin-protein ligase which is a component of the N-end rule pathway. Recognizes and binds to proteins bearing specific N-terminal residues that are destabilizing according to the N-end rule, leading to their ubiquitination and subsequent degradation. In complex with ced-3, required for the ced-3-mediated cleavage and subsequent degradation of the heterochronic protein lin-28 to regulate seam cell fate patterning during larval development. Negatively regulates glutamate metabolism through the aspartate aminotransferase got-1.2. Modulation of glutamate levels most likely controls locomotory behavior, in particular backwards locomotion or 'reversals'. The polypeptide is E3 ubiquitin-protein ligase ubr-1 (Caenorhabditis elegans).